Here is a 298-residue protein sequence, read N- to C-terminus: Fluorinase (298 aa).

S-adenosyl-L-methionine contacts are provided by residues Asp-14, 19 to 21 (DDS), Tyr-75, Ser-156, Asp-209, Asn-214, 268 to 269 (SR), and 276 to 278 (RNA).

This sequence belongs to the SAM hydrolase / SAM-dependent halogenase family.

The catalysed reaction is fluoride + S-adenosyl-L-methionine = 5'-deoxy-5'-fluoroadenosine + L-methionine. In terms of biological role, catalyzes the formation of a C-F bond by combining S-adenosyl-L-methionine (SAM) and fluoride to generate 5'-fluoro-5'-deoxyadenosine (5'-FDA) and L-methionine. This Actinoplanes sp. (strain N902-109) protein is Fluorinase.